Reading from the N-terminus, the 380-residue chain is E3 ubiquitin-protein ligase RNF13 (380 aa).

The first 34 residues, 1–34 (MLLSIGMLMLSATQVYTILTVQLFAFLNLLPVEA), serve as a signal peptide directing secretion. Residues 35-182 (DILAYNFENA…VPELSLPLEY (148 aa)) lie on the Lumenal side of the membrane. A PA domain is found at 64-160 (LKGFLINSKP…GESSANSLKD (97 aa)). N88 is a glycosylation site (N-linked (GlcNAc...) asparagine). Residues 183–203 (YLIPFLIIVGICLILIVIFMI) traverse the membrane as a helical segment. Over 204–380 (TKFVQDRHRN…EPDYNIANTV (177 aa)) the chain is Cytoplasmic. An RING-type; atypical zinc finger spans residues 240–282 (CAICLEEYEDGDKLRILPCSHAYHCKCVDPWLTKTKKTCPVCK). Residues 285-380 (VVPSQGDSDS…EPDYNIANTV (96 aa)) form a disordered region. Residues 338–356 (SDYEDDDNEETDSSDADNE) show a composition bias toward acidic residues.

As to quaternary structure, interacts with ERN1. In terms of processing, autoubiquitinated.

It is found in the endoplasmic reticulum membrane. Its subcellular location is the late endosome membrane. The protein localises to the lysosome membrane. It localises to the nucleus inner membrane. The catalysed reaction is S-ubiquitinyl-[E2 ubiquitin-conjugating enzyme]-L-cysteine + [acceptor protein]-L-lysine = [E2 ubiquitin-conjugating enzyme]-L-cysteine + N(6)-ubiquitinyl-[acceptor protein]-L-lysine.. It participates in protein modification; protein ubiquitination. Its function is as follows. E3 ubiquitin-protein ligase that regulates cell proliferation. Involved in apoptosis regulation. Mediates ER stress-induced activation of JNK signaling pathway and apoptosis by promoting ERN1 activation and splicing of XBP1 mRNA. Also involved in protein trafficking and localization. The polypeptide is E3 ubiquitin-protein ligase RNF13 (Rnf13) (Rattus norvegicus (Rat)).